Consider the following 333-residue polypeptide: MKMIGFEKPFKLEEGNLFKVYEQRKPTPENDDILVKVNSISVNPVDTKQRQMEVTQAPRVLGFDAIGTVEAIGPDVTLFSPGDVVFYAGSPNRQGSNATYQLVSEAIVAKAPHNISANEAVSLPLTGITAYETFFDTFKISTNPAENEGKSVLIINGAGGVGSIATQIAKRYGLTVITTASRQETTEWCEKMGADIVLNHKEDLVRQFKEIPLVDYIFCTYNTDLYYNTMIELIKPLGHITTIVAFNEDQDLNALKLKSITFTHEFMFARPIHRTPDMIKQHEYLEDITKNIESGHYQPTTTQVFEGLSPENLYQAHQLLEKQSMIGKLVINI.

It belongs to the zinc-containing alcohol dehydrogenase family. Quinone oxidoreductase subfamily.

The sequence is that of Zinc-type alcohol dehydrogenase-like protein SACOL2177 from Staphylococcus aureus (strain COL).